Reading from the N-terminus, the 364-residue chain is Apelin receptor (364 aa).

The Extracellular portion of the chain corresponds to Met1 to Leu39. Asn21 is a glycosylation site (N-linked (GlcNAc...) asparagine). 2 cysteine pairs are disulfide-bonded: Cys28/Cys288 and Cys110/Cys187. The chain crosses the membrane as a helical span at residues Leu40–Phe60. The Cytoplasmic segment spans residues Thr61–Asn78. A helical membrane pass occupies residues Leu79 to Leu99. Over Gly100 to Leu112 the chain is Extracellular. A helical transmembrane segment spans residues Ser113 to Phe133. The Cytoplasmic portion of the chain corresponds to Asp134–Ser153. A helical transmembrane segment spans residues Ile154–Ile174. Residues Leu175–Asn201 lie on the Extracellular side of the membrane. Asn183 is a glycosylation site (N-linked (GlcNAc...) asparagine). A helical transmembrane segment spans residues Phe202–Leu222. Topologically, residues Met223–Arg250 are cytoplasmic. A helical transmembrane segment spans residues Leu251–Ile271. Over Leu272–His298 the chain is Extracellular. The helical transmembrane segment at Pro299 to Phe319 threads the bilayer. The Cytoplasmic portion of the chain corresponds to Asp320 to Val364.

Belongs to the G-protein coupled receptor 1 family.

The protein localises to the cell membrane. Functionally, g protein-coupled receptor for peptide hormones apelin (apln) and apelin receptor early endogenous ligand (apela), that plays a role in the regulation of normal cardiovascular function and fluid homeostasis. When acting as apelin receptor, activates both G(i) protein pathway that inhibits adenylate cyclase activity, and the beta-arrestin pathway that promotes internalization of the receptor. Also functions as mechanoreceptor that is activated by pathological stimuli in a G-protein-independent fashion to induce beta-arrestin signaling, hence eliciting cardiac hypertrophy. However, the presence of apelin ligand blunts cardiac hypertrophic induction from APLNR/APJ on response to pathological stimuli. Plays a key role in early development such as gastrulation, blood vessels formation and heart morphogenesis by acting as a receptor for apela hormone, promoting endoderm and mesendoderm cell migration and regulating the migration of cells fated to become myocardial progenitors, respectively. Promotes angioblast migration toward the embryonic midline, i.e. the position of the future vessel formation, during vasculogenesis. May promote sinus venosus (SV)-derived endothelial cells migration into the developing heart to promote coronary blood vessel development. Required for cardiovascular development, particularly for intersomitic vein angiogenesis. Plays also a role in various processes in adults such as regulation of blood vessel formation, blood pressure, heart contractility, and heart failure. Acts upstream of the i/o type of G-alpha proteins in the differentiation of endothelium, erythroid cells, myeloid cells and cardiomyocytes. This chain is Apelin receptor (aplnr), found in Xenopus tropicalis (Western clawed frog).